A 272-amino-acid chain; its full sequence is MQILKDQENLNPDGGSFVLITPPLSPPKQKSLSYTNISRRHGMRACMKGIVYEVYKNQPKLWLQQELIWLRRKRIHPIPKARRNNHVGRWANRHSNVSSSSGSRGRSSVSSRDSSPSYSGALRSAERSISSSPSTIEARRRKSARGNGLNGAIDVANLPFEELPNFCPDMSVLDNRTHPRTLKAEWKGPPLDLSDDPYRDLLHPAELHLASTLRLPCLIYLDNKKRIFAEWHHRRQQGLTFRKTDAQRASRVDVNKASRLWKAFHEVGFFDD.

Positions 86 to 148 are disordered; sequence HVGRWANRHS…RRRKSARGNG (63 aa). 2 stretches are compositionally biased toward low complexity: residues 95-120 and 127-136; these read SNVSSSSGSRGRSSVSSRDSSPSYSG and RSISSSPSTI. Phosphoserine occurs at positions 130 and 132. T135 is subject to Phosphothreonine. The region spanning 182–272 is the SWIRM domain; that stretch reads LKAEWKGPPL…AFHEVGFFDD (91 aa).

Component of the RPD3C(L) complex.

It localises to the nucleus. Its function is as follows. Component of the RPD3C(L) histone deacetylase complex (HDAC) responsible for the deacetylation of lysine residues on the N-terminal part of the core histones (H2A, H2B, H3 and H4). Histone deacetylation gives a tag for epigenetic repression and plays an important role in transcriptional regulation, cell cycle progression and developmental events. This chain is SWIRM domain-containing protein laf2 (laf2), found in Schizosaccharomyces pombe (strain 972 / ATCC 24843) (Fission yeast).